Consider the following 168-residue polypeptide: Ribosome maturation factor RimM (168 aa).

One can recognise a PRC barrel domain in the interval 95 to 168 (KEGDYYWTDL…IIVVEWDADF (74 aa)).

Belongs to the RimM family. As to quaternary structure, binds ribosomal protein uS19.

It localises to the cytoplasm. Its function is as follows. An accessory protein needed during the final step in the assembly of 30S ribosomal subunit, possibly for assembly of the head region. Essential for efficient processing of 16S rRNA. May be needed both before and after RbfA during the maturation of 16S rRNA. It has affinity for free ribosomal 30S subunits but not for 70S ribosomes. The chain is Ribosome maturation factor RimM from Coxiella burnetii (strain CbuK_Q154) (Coxiella burnetii (strain Q154)).